The following is a 477-amino-acid chain: Probable ribonuclease FAU-1 (477 aa).

This sequence belongs to the FAU-1 family.

Its function is as follows. Probable RNase involved in rRNA stability through maturation and/or degradation of precursor rRNAs. Binds to RNA in loop regions with AU-rich sequences. The polypeptide is Probable ribonuclease FAU-1 (Staphylothermus marinus (strain ATCC 43588 / DSM 3639 / JCM 9404 / F1)).